The primary structure comprises 702 residues: Polyribonucleotide nucleotidyltransferase (702 aa).

Mg(2+) is bound by residues aspartate 485 and aspartate 491. The 61-residue stretch at 552-612 (PRTEIICIDP…EGVKKAISII (61 aa)) folds into the KH domain. The S1 motif domain occupies 622-690 (GEIYLGKVTK…NQGRINLSRK (69 aa)).

The protein belongs to the polyribonucleotide nucleotidyltransferase family. The cofactor is Mg(2+).

It localises to the cytoplasm. It catalyses the reaction RNA(n+1) + phosphate = RNA(n) + a ribonucleoside 5'-diphosphate. In terms of biological role, involved in mRNA degradation. Catalyzes the phosphorolysis of single-stranded polyribonucleotides processively in the 3'- to 5'-direction. This is Polyribonucleotide nucleotidyltransferase from Clostridium botulinum (strain Loch Maree / Type A3).